The following is a 445-amino-acid chain: Probable glycine dehydrogenase (decarboxylating) subunit 1 (445 aa).

It belongs to the GcvP family. N-terminal subunit subfamily. The glycine cleavage system is composed of four proteins: P, T, L and H. In this organism, the P 'protein' is a heterodimer of two subunits.

The enzyme catalyses N(6)-[(R)-lipoyl]-L-lysyl-[glycine-cleavage complex H protein] + glycine + H(+) = N(6)-[(R)-S(8)-aminomethyldihydrolipoyl]-L-lysyl-[glycine-cleavage complex H protein] + CO2. Functionally, the glycine cleavage system catalyzes the degradation of glycine. The P protein binds the alpha-amino group of glycine through its pyridoxal phosphate cofactor; CO(2) is released and the remaining methylamine moiety is then transferred to the lipoamide cofactor of the H protein. This Citrifermentans bemidjiense (strain ATCC BAA-1014 / DSM 16622 / JCM 12645 / Bem) (Geobacter bemidjiensis) protein is Probable glycine dehydrogenase (decarboxylating) subunit 1.